The sequence spans 357 residues: Sorbitol dehydrogenase (357 aa).

Position 2 is an N-acetylalanine (Ala-2). Cys-45 provides a ligand contact to Zn(2+). Tyr-51 provides a ligand contact to substrate. Zn(2+) contacts are provided by His-70 and Glu-71. Position 156 (Glu-156) interacts with substrate. Residues Ile-184, Asp-204, and Arg-209 each contribute to the NAD(+) site. Phosphoserine is present on residues Ser-211 and Ser-225. NAD(+) is bound by residues 273-275 and 297-299; these read VGL and VFR. Substrate contacts are provided by Arg-299 and Tyr-300.

It belongs to the zinc-containing alcohol dehydrogenase family. In terms of assembly, homotetramer. It depends on Zn(2+) as a cofactor.

Its subcellular location is the mitochondrion membrane. It is found in the cell projection. The protein resides in the cilium. The protein localises to the flagellum. The catalysed reaction is xylitol + NAD(+) = D-xylulose + NADH + H(+). It carries out the reaction L-iditol + NAD(+) = keto-L-sorbose + NADH + H(+). It catalyses the reaction keto-D-fructose + NADH + H(+) = D-sorbitol + NAD(+). Polyol dehydrogenase that catalyzes the reversible NAD(+)-dependent oxidation of various sugar alcohols. Is active with xylitol, L-iditol and D-sorbitol (D-glucitol) as substrates, leading to the C2-oxidized products D-xylulose, L-sorbose and D-fructose, respectively. Is a key enzyme in the polyol pathway that interconverts glucose and fructose via sorbitol, which constitutes an important alternate route for glucose metabolism. May play a role in sperm motility by using sorbitol as an alternative energy source for sperm motility. This chain is Sorbitol dehydrogenase (SORD), found in Macaca fascicularis (Crab-eating macaque).